The chain runs to 485 residues: Sulfated surface glycoprotein 185 (485 aa).

An N-terminal signal peptide occupies residues 1–20; it reads MSKLLLVALFGAIAVVATSA. Residue N193 is glycosylated (N-linked (GlcNAc...) asparagine). The tract at residues 212–317 is disordered; sequence LSGPNVNPIG…PPVPPPPSPP (106 aa). 2 stretches are compositionally biased toward pro residues: residues 221 to 234 and 241 to 317; these read GPAP…PSPQ and PPSP…PSPP. N-linked (GlcNAc...) asparagine glycosylation occurs at N347.

As to quaternary structure, polymer. In terms of processing, intersubunit cross-links are formed between saccharide chains rather than between polypeptide chains. Hydroxylated on proline residues in the Pro-rich central domain. Post-translationally, glycosylated; contains sulfate-substituted glycans.

In terms of biological role, the extracellular matrix (ECM) of Volvox contains insoluble fibrous layers that surround individual cells at a distance to form contiguous cellular compartments. SSG 185 is the monomeric precursor of this substructure (C3Z structure). The sequence is that of Sulfated surface glycoprotein 185 from Volvox carteri (Green alga).